Here is a 910-residue protein sequence, read N- to C-terminus: MVSLGGLARKVFGSSNDRRVKSTRPRVEAINAMENEMRALSDTELAGRTEKFRQDIANGASLDDLLVPAFATAREAARRVLGMRPFDVQLIGGMVLHNGGIAEMRTGEGKTLVATLPVYLNALAGKGVHVVTVNDYLATRDSEWMGRVYKFLGLSVGVIVHGLSDEERRVAYASDVTYATNNELGFDYLRDNMKYERAQMVQRGHNYAIVDEVDSILVDEARTPLIISGPLEDRSEMYNTIDTFIIQLQPQDYEIDEKQKTSIFTEEGTEKLENLLRDADLLKGESLYDVENVAIVHHVNNALKAHRLFQKDKDYIVRNGEIVIIDEFTGRMMPGRRYSEGLHQALEAKEHVAIQPENQTLASVTFQNYFRLYKKLSGMTGTALTEAEEFGNIYGLEVTEIPTNLPVIRKDEDDEVYRTVEEKYKAIVKEIREASAKGQPTLVGTTSIEKSEQLADRLRKEGFKDFEVLNARHHEREAAIVAQAGKPGAITIATNMAGRGTDIKLGGNAEMRIADELGDMPEGPEREAREKEIIADVERLKEKALAAGGLYVLATERHESRRIDNQLRGRSGRQGDPGRSKFFLSLQDDLMRIFGSERMDGMLQKLGLKEDEAIIHPWINKALEKAQKKVEARNFDIRKNLLKYDDVSNDQRKVVFEQRIELMDGEGLSETIAEMREGVIDEIVAKAIPENAYAEQWDVAGLKAEVAEFLNLDLPVEDWAKEEGIAEDDIRERITQAADAAAKERAERFGPEVMNYVERSVVLQTLDHLWREHIVNLDHLRSVVGFRGYAQRDPLQEYKGEAFELFQAMLGNLRQAVTAQLMRVELVRQAAEAPPPEAPDMFGTHIDGTTGENDFEGGETALLVRQEQNAVVAPEDRDPNNQATWGKVGRNEACPCGSGKKYKHCHGAFA.

ATP is bound by residues glutamine 89, glycine 107–threonine 111, and aspartate 502. Residues cysteine 894, cysteine 896, cysteine 905, and histidine 906 each coordinate Zn(2+).

It belongs to the SecA family. As to quaternary structure, monomer and homodimer. Part of the essential Sec protein translocation apparatus which comprises SecA, SecYEG and auxiliary proteins SecDF-YajC and YidC. Requires Zn(2+) as cofactor.

It is found in the cell inner membrane. The protein localises to the cytoplasm. The catalysed reaction is ATP + H2O + cellular proteinSide 1 = ADP + phosphate + cellular proteinSide 2.. Its function is as follows. Part of the Sec protein translocase complex. Interacts with the SecYEG preprotein conducting channel. Has a central role in coupling the hydrolysis of ATP to the transfer of proteins into and across the cell membrane, serving both as a receptor for the preprotein-SecB complex and as an ATP-driven molecular motor driving the stepwise translocation of polypeptide chains across the membrane. The protein is Protein translocase subunit SecA of Mesorhizobium japonicum (strain LMG 29417 / CECT 9101 / MAFF 303099) (Mesorhizobium loti (strain MAFF 303099)).